A 210-amino-acid chain; its full sequence is 7-methyl-GTP pyrophosphatase (210 aa).

Residue Asp-79 is the Proton acceptor of the active site.

This sequence belongs to the Maf family. YceF subfamily. Requires a divalent metal cation as cofactor.

The protein resides in the cytoplasm. The enzyme catalyses N(7)-methyl-GTP + H2O = N(7)-methyl-GMP + diphosphate + H(+). Its function is as follows. Nucleoside triphosphate pyrophosphatase that hydrolyzes 7-methyl-GTP (m(7)GTP). May have a dual role in cell division arrest and in preventing the incorporation of modified nucleotides into cellular nucleic acids. The polypeptide is 7-methyl-GTP pyrophosphatase (Burkholderia lata (strain ATCC 17760 / DSM 23089 / LMG 22485 / NCIMB 9086 / R18194 / 383)).